The sequence spans 162 residues: NADH-quinone oxidoreductase subunit I 2 (162 aa).

4Fe-4S ferredoxin-type domains lie at 53–83 (LRRYPNGEERCIACKLCEAVCPALAITIDSE) and 93–122 (TRYDIDLFKCIYCGFCEESCPVDSIVETRI). C63, C66, C69, C73, C102, C105, C108, and C112 together coordinate [4Fe-4S] cluster.

This sequence belongs to the complex I 23 kDa subunit family. As to quaternary structure, NDH-1 is composed of 14 different subunits. Subunits NuoA, H, J, K, L, M, N constitute the membrane sector of the complex. [4Fe-4S] cluster is required as a cofactor.

The protein resides in the cell inner membrane. The catalysed reaction is a quinone + NADH + 5 H(+)(in) = a quinol + NAD(+) + 4 H(+)(out). Its function is as follows. NDH-1 shuttles electrons from NADH, via FMN and iron-sulfur (Fe-S) centers, to quinones in the respiratory chain. The immediate electron acceptor for the enzyme in this species is believed to be ubiquinone. Couples the redox reaction to proton translocation (for every two electrons transferred, four hydrogen ions are translocated across the cytoplasmic membrane), and thus conserves the redox energy in a proton gradient. The polypeptide is NADH-quinone oxidoreductase subunit I 2 (Nitrosococcus oceani (strain ATCC 19707 / BCRC 17464 / JCM 30415 / NCIMB 11848 / C-107)).